A 173-amino-acid chain; its full sequence is Shikimate kinase 2 (173 aa).

ATP is bound at residue 12–17 (GCGKTT). Positions 16 and 32 each coordinate Mg(2+). Substrate contacts are provided by Asp-34, Arg-58, and Gly-79. Positions 112–126 (EENPQDNQRPTLTGR) are LID domain. Residue Arg-120 participates in ATP binding. Arg-139 serves as a coordination point for substrate. Residue Gln-155 coordinates ATP.

The protein belongs to the shikimate kinase family. AroL subfamily. In terms of assembly, monomer. The cofactor is Mg(2+).

It localises to the cytoplasm. It catalyses the reaction shikimate + ATP = 3-phosphoshikimate + ADP + H(+). It functions in the pathway metabolic intermediate biosynthesis; chorismate biosynthesis; chorismate from D-erythrose 4-phosphate and phosphoenolpyruvate: step 5/7. Its function is as follows. Catalyzes the specific phosphorylation of the 3-hydroxyl group of shikimic acid using ATP as a cosubstrate. In Pectobacterium atrosepticum (strain SCRI 1043 / ATCC BAA-672) (Erwinia carotovora subsp. atroseptica), this protein is Shikimate kinase 2.